A 258-amino-acid polypeptide reads, in one-letter code: Thiazole synthase (258 aa).

The active-site Schiff-base intermediate with DXP is Lys100. 1-deoxy-D-xylulose 5-phosphate-binding positions include Gly161, 187-188 (AG), and 209-210 (NT).

Belongs to the ThiG family. Homotetramer. Forms heterodimers with either ThiH or ThiS.

Its subcellular location is the cytoplasm. It carries out the reaction [ThiS sulfur-carrier protein]-C-terminal-Gly-aminoethanethioate + 2-iminoacetate + 1-deoxy-D-xylulose 5-phosphate = [ThiS sulfur-carrier protein]-C-terminal Gly-Gly + 2-[(2R,5Z)-2-carboxy-4-methylthiazol-5(2H)-ylidene]ethyl phosphate + 2 H2O + H(+). The protein operates within cofactor biosynthesis; thiamine diphosphate biosynthesis. In terms of biological role, catalyzes the rearrangement of 1-deoxy-D-xylulose 5-phosphate (DXP) to produce the thiazole phosphate moiety of thiamine. Sulfur is provided by the thiocarboxylate moiety of the carrier protein ThiS. In vitro, sulfur can be provided by H(2)S. This is Thiazole synthase from Campylobacter jejuni subsp. jejuni serotype O:2 (strain ATCC 700819 / NCTC 11168).